Consider the following 211-residue polypeptide: ATP phosphoribosyltransferase (211 aa).

This sequence belongs to the ATP phosphoribosyltransferase family. Short subfamily. As to quaternary structure, heteromultimer composed of HisG and HisZ subunits.

The protein localises to the cytoplasm. The enzyme catalyses 1-(5-phospho-beta-D-ribosyl)-ATP + diphosphate = 5-phospho-alpha-D-ribose 1-diphosphate + ATP. Its pathway is amino-acid biosynthesis; L-histidine biosynthesis; L-histidine from 5-phospho-alpha-D-ribose 1-diphosphate: step 1/9. Functionally, catalyzes the condensation of ATP and 5-phosphoribose 1-diphosphate to form N'-(5'-phosphoribosyl)-ATP (PR-ATP). Has a crucial role in the pathway because the rate of histidine biosynthesis seems to be controlled primarily by regulation of HisG enzymatic activity. In Bacillus cereus (strain ATCC 14579 / DSM 31 / CCUG 7414 / JCM 2152 / NBRC 15305 / NCIMB 9373 / NCTC 2599 / NRRL B-3711), this protein is ATP phosphoribosyltransferase.